The sequence spans 323 residues: Pantothenate kinase (323 aa).

An ATP-binding site is contributed by 101–108 (GSVAVGKS).

It belongs to the prokaryotic pantothenate kinase family.

It localises to the cytoplasm. It catalyses the reaction (R)-pantothenate + ATP = (R)-4'-phosphopantothenate + ADP + H(+). It functions in the pathway cofactor biosynthesis; coenzyme A biosynthesis; CoA from (R)-pantothenate: step 1/5. The polypeptide is Pantothenate kinase (Xanthobacter autotrophicus (strain ATCC BAA-1158 / Py2)).